The primary structure comprises 572 residues: Arginine--tRNA ligase (572 aa).

Residues 122-132 (PNLAKEMHVGH) carry the 'HIGH' region motif.

It belongs to the class-I aminoacyl-tRNA synthetase family. As to quaternary structure, monomer.

It localises to the cytoplasm. It catalyses the reaction tRNA(Arg) + L-arginine + ATP = L-arginyl-tRNA(Arg) + AMP + diphosphate. The chain is Arginine--tRNA ligase from Neisseria meningitidis serogroup B (strain ATCC BAA-335 / MC58).